We begin with the raw amino-acid sequence, 910 residues long: Staphylococcal nuclease domain-containing protein 1 (910 aa).

Position 2 is an N-acetylalanine (Ala-2). 3 consecutive TNase-like domains span residues 18 to 166, 193 to 328, and 341 to 496; these read TVQR…MWSE, KPVN…IWRD, and KQFV…LHSK. Thr-103 is modified (phosphothreonine). N6-acetyllysine is present on Lys-193. Thr-240 bears the Phosphothreonine mark. Short sequence motifs (nuclear localization signal) lie at residues 321–325 and 388–392; these read RRLRI and KKLRP. Ser-426 bears the Phosphoserine mark. Lys-513 is covalently cross-linked (Glycyl lysine isopeptide (Lys-Gly) (interchain with G-Cter in SUMO2)). In terms of domain architecture, TNase-like 4 spans 525–660; that stretch reads GRSEAVVEYV…KQKKEKVWAH (136 aa). Lys-641 carries the N6-acetyllysine modification. Phosphoserine is present on Ser-645. In terms of domain architecture, Tudor spans 729-787; that stretch reads APRRGEFCIAKFVDGEWYRARVEKVESPAKVHVFYIDYGNREILPSTRLGTLPPAFSTR. Position 779 is a phosphothreonine (Thr-779). Residues Ser-785 and Ser-909 each carry the phosphoserine modification.

In terms of assembly, forms a ternary complex with STAT6 and POLR2A. Associates with the RNA-induced silencing complex (RISC). Interacts with the RISC components AGO2, FMR1 and TNRC6A. Interacts with GTF2E1 and GTF2E2. Interacts with PIM1. Interacts with STAT5. Interacts with SYT11 (via C2 2 domain); the interaction with SYT11 is direct. Post-translationally, phosphorylated by PIM1 in vitro. In lactating cows highly expressed in mammary epithelial cells.

It localises to the cytoplasm. The protein resides in the nucleus. Its subcellular location is the melanosome. The catalysed reaction is Endonucleolytic cleavage to nucleoside 3'-phosphates and 3'-phosphooligonucleotide end-products.. In terms of biological role, endonuclease that mediates miRNA decay of both protein-free and AGO2-loaded miRNAs. As part of its function in miRNA decay, regulates mRNAs involved in G1-to-S phase transition. Functions as a bridging factor between STAT6 and the basal transcription factor. Plays a role in PIM1 regulation of MYB activity. Functions as a transcriptional coactivator for STAT5. This is Staphylococcal nuclease domain-containing protein 1 (SND1) from Bos taurus (Bovine).